The chain runs to 38 residues: SAAADPLIVELPNGKVRGRDNEGYYEAEGIPRAEPPVG.

The disordered stretch occupies residues Ser1 to Gly38.

The protein belongs to the type-B carboxylesterase/lipase family.

The enzyme catalyses a carboxylic ester + H2O = an alcohol + a carboxylate + H(+). The sequence is that of Esterase-5 (Est-5) from Drosophila mojavensis (Fruit fly).